Reading from the N-terminus, the 277-residue chain is Carbonyl reductase [NADPH] 3 (277 aa).

Position 2 is an N-acetylserine (Ser2). NADP(+)-binding positions include 10–34 (VTGA…GDVV), 38–42 (RDVAR), 63–64 (DI), and Asn90. Ser30 is subject to Phosphoserine. Ser140 provides a ligand contact to substrate. Tyr194 functions as the Proton acceptor in the catalytic mechanism. Residues 194-198 (YGVSK) and Asp239 contribute to the NADP(+) site.

It belongs to the short-chain dehydrogenases/reductases (SDR) family. Detected in ovary, pancreas, intestine, colon, kidney, brain, thymus, lung, heart, liver, spleen, leukocyte, prostate and testis.

It is found in the cytoplasm. It catalyses the reaction a secondary alcohol + NADP(+) = a ketone + NADPH + H(+). It carries out the reaction a quinone + NADPH + H(+) = a quinol + NADP(+). Catalyzes the NADPH-dependent reduction of carbonyl compounds to their corresponding alcohols. Has low NADPH-dependent oxidoreductase activity. Acts on several orthoquinones, acts as well on non-quinone compounds, such as isatin or on the anticancer drug oracin. Best substrates for CBR3 is 1,2- naphthoquinone, hence could play a role in protection against cytotoxicity of exogenous quinones. Exerts activity toward ortho-quinones but not paraquinones. No endogenous substrate for CBR3 except isatin has been identified. The protein is Carbonyl reductase [NADPH] 3 of Homo sapiens (Human).